A 419-amino-acid chain; its full sequence is UDP-N-acetylglucosamine 1-carboxyvinyltransferase (419 aa).

22–23 contacts phosphoenolpyruvate; it reads KN. Arginine 93 contributes to the UDP-N-acetyl-alpha-D-glucosamine binding site. Cysteine 117 acts as the Proton donor in catalysis. Cysteine 117 carries the 2-(S-cysteinyl)pyruvic acid O-phosphothioketal modification. UDP-N-acetyl-alpha-D-glucosamine is bound by residues aspartate 307 and isoleucine 329.

The protein belongs to the EPSP synthase family. MurA subfamily.

It localises to the cytoplasm. It carries out the reaction phosphoenolpyruvate + UDP-N-acetyl-alpha-D-glucosamine = UDP-N-acetyl-3-O-(1-carboxyvinyl)-alpha-D-glucosamine + phosphate. The protein operates within cell wall biogenesis; peptidoglycan biosynthesis. Functionally, cell wall formation. Adds enolpyruvyl to UDP-N-acetylglucosamine. The polypeptide is UDP-N-acetylglucosamine 1-carboxyvinyltransferase (Pseudoalteromonas atlantica (strain T6c / ATCC BAA-1087)).